We begin with the raw amino-acid sequence, 389 residues long: MQDINSGSSSMKDTYSSWIEISKRSLSNNLDNFRSILRPNSTLTAILKSNAYGHGIEPMTRLCIEAGISRIGVNSIEEALLIRNIDSKIPILIMGEIQNPEKRKNVLSDPNFWIVFSRPETARILSSFLPAPKLHLKIDTGMGRLGSHGETLKQTLSELKNVGITLGGICTHFASTEDVLEHKYSLMQTQKFEEAIFLAKSFGYNHLIRHACASASTMLFPNAHFDMVRIGISLYGLWPSIQTRLSLNLTGNKNFQLNPILSWKSRIVHIQYHPADSYIGYGSTFQTSYPTKVAIVPVGYYEGLDRKLSSNGDMLVLGKKARIIGRICMNMTMLDVTHIPGAEVGSIVTIIGQDGEESITADDLADRTHTINYEVMTRISESIPRIVVD.

The active-site Proton acceptor; specific for D-alanine is Lys48. Lys48 carries the N6-(pyridoxal phosphate)lysine modification. A substrate-binding site is contributed by Arg144. The active-site Proton acceptor; specific for L-alanine is the Tyr281. Position 329 (Met329) interacts with substrate.

It belongs to the alanine racemase family. The cofactor is pyridoxal 5'-phosphate.

It carries out the reaction L-alanine = D-alanine. It participates in amino-acid biosynthesis; D-alanine biosynthesis; D-alanine from L-alanine: step 1/1. Functionally, catalyzes the interconversion of L-alanine and D-alanine. May also act on other amino acids. This is Alanine racemase (alr) from Leptospira interrogans serogroup Icterohaemorrhagiae serovar copenhageni (strain Fiocruz L1-130).